A 399-amino-acid polypeptide reads, in one-letter code: Integral membrane protein GPR137B (399 aa).

Positions 1–22 (MRPERPRPRGSAPGPMETPPWD) are disordered. Over 1-46 (MRPERPRPRGSAPGPMETPPWDPARNDSLPPTLTPAVPPYVKLGLT) the chain is Lumenal. The N-linked (GlcNAc...) asparagine glycan is linked to Asn-26. A helical membrane pass occupies residues 47–67 (VVYTVFYALLFVFIYVQLWLV). Residues 68–79 (LRYRHKRLSYQS) lie on the Cytoplasmic side of the membrane. Residues 80–100 (VFLFLCLFWASLRTVLFSFYF) form a helical membrane-spanning segment. The Lumenal portion of the chain corresponds to 101-111 (KDFVAANSLSP). A helical transmembrane segment spans residues 112 to 132 (FVFWLLYCFPVCLQFFTLTLM). The Cytoplasmic segment spans residues 133 to 159 (NLYFTQVIFKAKSKYSPELLKYRLPLY). The chain crosses the membrane as a helical span at residues 160 to 180 (LASLFISLVFLLVNLTCAVLV). Over 181–188 (KTGNWERK) the chain is Lumenal. Residues 189 to 209 (VIVSVRVAINDTLFVLCAVSL) form a helical membrane-spanning segment. The Cytoplasmic portion of the chain corresponds to 210–237 (SICLYKISKMSLANIYLESKGSSVCQVT). A helical membrane pass occupies residues 238–258 (AIGVTVILLYTSRACYNLFIL). The Lumenal portion of the chain corresponds to 259–292 (SFSQNKSVHSFDYDWYNVSDQADLKNQLGDAGYV). N-linked (GlcNAc...) asparagine glycans are attached at residues Asn-263 and Asn-275. The helical transmembrane segment at 293–313 (LFGVVLFVWELLPTTLVVYFF) threads the bilayer. At 314–399 (RVRNPTKDLT…TLDPDKPSLG (86 aa)) the chain is on the cytoplasmic side.

This sequence belongs to the GPR137 family. Interaction with RRAGA; increases RRAGA recruitment to lysosomes. Interacts with MTOR; this interaction is amino acid sensitive. Expressed in kidney, heart, brain and placenta.

It is found in the lysosome membrane. Lysosomal integral membrane protein that regulates the localization and activity of mTORC1, a signaling complex promoting cell growth in response to growth factors, energy levels, and amino acids. Interacts with Rag GTPases and increases the lysosomial localization and activity of Rag GTPases and thereby regulates mTORC1 translocation and activity in lysosome. Involved in the regulation of lysosomal morphology and autophagy. Its function is as follows. Also acts as a negative regulator of osteoclast activity. Involved in interleukin-4-induced M2 macrophage polarization. The sequence is that of Integral membrane protein GPR137B (GPR137B) from Homo sapiens (Human).